Reading from the N-terminus, the 43-residue chain is CLCNSDGPSVRGNTLSGILWLAGCPSGWHNCKKHKPTIGWCCK.

Cystine bridges form between C1/C41, C3/C31, and C24/C42.

The protein localises to the secreted. It is found in the nematocyst. Binds specifically to voltage-gated sodium channels (Nav), thereby delaying their inactivation during signal transduction. Thus it strongly stimulates mammalian cardiac muscle contraction. The sequence is that of Delta-actitoxin-Bca1a from Bunodosoma capense (Knobbly sea anemone).